The following is a 437-amino-acid chain: Aspartate aminotransferase, mitochondrial (437 aa).

3 residues coordinate L-aspartate: Gly72, Trp167, and Asn220. Residue Lys284 is modified to N6-(pyridoxal phosphate)lysine. Arg413 contacts L-aspartate.

The protein belongs to the class-I pyridoxal-phosphate-dependent aminotransferase family. Homodimer. Pyridoxal 5'-phosphate is required as a cofactor.

The protein localises to the mitochondrion matrix. It carries out the reaction L-aspartate + 2-oxoglutarate = oxaloacetate + L-glutamate. Functionally, plays a key role in amino acid metabolism. Important for metabolite exchange between mitochondria and cytosol. The polypeptide is Aspartate aminotransferase, mitochondrial (Schizosaccharomyces pombe (strain 972 / ATCC 24843) (Fission yeast)).